The sequence spans 450 residues: Phosphoglucosamine mutase (450 aa).

Serine 104 (phosphoserine intermediate) is an active-site residue. Residues serine 104, aspartate 241, aspartate 243, and aspartate 245 each contribute to the Mg(2+) site. At serine 104 the chain carries Phosphoserine.

This sequence belongs to the phosphohexose mutase family. It depends on Mg(2+) as a cofactor. In terms of processing, activated by phosphorylation.

The catalysed reaction is alpha-D-glucosamine 1-phosphate = D-glucosamine 6-phosphate. Functionally, catalyzes the conversion of glucosamine-6-phosphate to glucosamine-1-phosphate. In Renibacterium salmoninarum (strain ATCC 33209 / DSM 20767 / JCM 11484 / NBRC 15589 / NCIMB 2235), this protein is Phosphoglucosamine mutase.